Here is a 662-residue protein sequence, read N- to C-terminus: Protein Aster-C (662 aa).

The interval Met1–Val34 is disordered. Positions Glu69 to Lys136 constitute a GRAM domain. Disordered stretches follow at residues Ser212 to Ser237 and Val250 to Leu284. Residues Leu265 to Thr276 are compositionally biased toward basic and acidic residues. Residues His326–Asn497 form the VASt domain. A helical membrane pass occupies residues Leu557–Leu577.

Its subcellular location is the endoplasmic reticulum membrane. It is found in the cell membrane. Cholesterol transporter that mediates non-vesicular transport of cholesterol from the plasma membrane (PM) to the endoplasmic reticulum (ER). Contains unique domains for binding cholesterol and the PM, thereby serving as a molecular bridge for the transfer of cholesterol from the PM to the ER. Plays a crucial role in cholesterol homeostasis and has the unique ability to localize to the PM based on the level of membrane cholesterol. In lipid-poor conditions localizes to the ER membrane and in response to excess cholesterol in the PM is recruited to the endoplasmic reticulum-plasma membrane contact sites (EPCS) which is mediated by the GRAM domain. At the EPCS, the sterol-binding VASt/ASTER domain binds to the cholesterol in the PM and facilitates its transfer from the PM to ER. The sequence is that of Protein Aster-C (GRAMD1C) from Pongo abelii (Sumatran orangutan).